Here is a 571-residue protein sequence, read N- to C-terminus: Proline--tRNA ligase (571 aa).

It belongs to the class-II aminoacyl-tRNA synthetase family. ProS type 1 subfamily. As to quaternary structure, homodimer.

The protein resides in the cytoplasm. The catalysed reaction is tRNA(Pro) + L-proline + ATP = L-prolyl-tRNA(Pro) + AMP + diphosphate. Catalyzes the attachment of proline to tRNA(Pro) in a two-step reaction: proline is first activated by ATP to form Pro-AMP and then transferred to the acceptor end of tRNA(Pro). As ProRS can inadvertently accommodate and process non-cognate amino acids such as alanine and cysteine, to avoid such errors it has two additional distinct editing activities against alanine. One activity is designated as 'pretransfer' editing and involves the tRNA(Pro)-independent hydrolysis of activated Ala-AMP. The other activity is designated 'posttransfer' editing and involves deacylation of mischarged Ala-tRNA(Pro). The misacylated Cys-tRNA(Pro) is not edited by ProRS. In Shewanella sp. (strain W3-18-1), this protein is Proline--tRNA ligase.